The primary structure comprises 392 residues: Lipase (392 aa).

A signal peptide spans 1-26; sequence MVSFISISQGVSLCLLVSSMMLGSSA. Positions 27–95 are excised as a propeptide; the sequence is VPVSGKSGSS…GGNLTSIGKR (69 aa). Positions 50 to 69 are disordered; sequence PLISSRCAPPSNKGSKSDLQ. 3 disulfide bridges follow: C152/C391, C163/C166, and C358/C367. S268 serves as the catalytic Nucleophile. D327 (charge relay system) is an active-site residue. D379 contributes to the Ca(2+) binding site. H380 serves as the catalytic Charge relay system.

The protein belongs to the AB hydrolase superfamily. Lipase family.

The protein resides in the secreted. Its subcellular location is the extracellular space. It carries out the reaction a triacylglycerol + H2O = a diacylglycerol + a fatty acid + H(+). With respect to regulation, lipase activity is maximal at a lipid-water interface (interfacial activation), probably by an induced conformational change that results in an increased accessibility of the active site to the substrate. Its function is as follows. Hydrolyzes ester bonds of triglycerides as well as of their derived partial glycerides with a strong 1,3-positional specificity. This Rhizopus niveus protein is Lipase.